Here is a 468-residue protein sequence, read N- to C-terminus: Nicotinamide phosphoribosyltransferase (468 aa).

R180 is a diphosphate binding site. D203 is a beta-nicotinamide D-ribonucleotide binding site. Diphosphate is bound by residues H229 and R293. H229 is subject to Phosphohistidine; by autocatalysis. Beta-nicotinamide D-ribonucleotide contacts are provided by D335 and R373.

This sequence belongs to the NAPRTase family. As to quaternary structure, homodimer. The dimeric structure consists of two protomers arranged head to tail, with domain A on one protomer interacting with domain B on the other protomer. Post-translationally, phosphorylation at His-229 plays a crucial role in enhancing the substrate affinity and is important for maintaining enzymatic activity.

The catalysed reaction is beta-nicotinamide D-ribonucleotide + diphosphate = 5-phospho-alpha-D-ribose 1-diphosphate + nicotinamide + H(+). It participates in cofactor biosynthesis; NAD(+) biosynthesis; nicotinamide D-ribonucleotide from 5-phospho-alpha-D-ribose 1-diphosphate and nicotinamide: step 1/1. With respect to regulation, ATP-dependent autophosphorylation plays a vital role in nicotinamide binding and enzyme activation. Activity is inhibited by FK866. In terms of biological role, catalyzes the condensation of nicotinamide with 5-phosphoribosyl-1-pyrophosphate to yield nicotinamide mononucleotide, an intermediate in the biosynthesis of NAD. Plays an important role in the biosynthesis of NAD via the nicotinamide (NAM) salvage pathway. Is also capable of hydrolyzing ATP and shows ATP-dependent autophosphorylation activity. The chain is Nicotinamide phosphoribosyltransferase from Xanthomonas campestris pv. campestris (strain 8004).